Consider the following 218-residue polypeptide: DNA-directed RNA polymerase III subunit RPC7-like (218 aa).

A disordered region spans residues 130 to 218 (TIILPKRPPK…SDDNMDEAIY (89 aa)). Residues 139-160 (KTTEDKEETIQKLETLEKKEEE) show a composition bias toward basic and acidic residues. 2 stretches are compositionally biased toward acidic residues: residues 161–193 (VTSE…EETD) and 201–218 (NGED…EAIY).

The protein belongs to the eukaryotic RPC7 RNA polymerase subunit family. As to quaternary structure, component of the RNA polymerase III (Pol III) complex consisting of 17 subunits. Pol III exists as two alternative complexes defined by the mutually exclusive incorporation of subunit POLR3G/RPC7alpha or POLR3GL/RPC7beta. Found in a trimeric complex with POLR3C/RPC3 and POLR3F/RPC6. Directly interacts with POLR3C.

Its subcellular location is the nucleus. Functionally, DNA-dependent RNA polymerase catalyzes the transcription of DNA into RNA using the four ribonucleoside triphosphates as substrates. Specific peripheric component of RNA polymerase III which synthesizes small RNAs, such as 5S rRNA and tRNAs. The sequence is that of DNA-directed RNA polymerase III subunit RPC7-like (POLR3GL) from Bos taurus (Bovine).